A 178-amino-acid polypeptide reads, in one-letter code: Transcription factor E (178 aa).

Residues 5 to 89 (AEELILSLAK…YWKVNIDQIN (85 aa)) enclose the HTH TFE/IIEalpha-type domain.

Belongs to the TFE family. Monomer. Interaction with RNA polymerase subunits RpoF and RpoE is necessary for Tfe stimulatory transcription activity. Able to interact with Tbp and RNA polymerase in the absence of DNA promoter. Interacts both with the preinitiation and elongation complexes.

Transcription factor that plays a role in the activation of archaeal genes transcribed by RNA polymerase. Facilitates transcription initiation by enhancing TATA-box recognition by TATA-box-binding protein (Tbp), and transcription factor B (Tfb) and RNA polymerase recruitment. Not absolutely required for transcription in vitro, but particularly important in cases where Tbp or Tfb function is not optimal. It dynamically alters the nucleic acid-binding properties of RNA polymerases by stabilizing the initiation complex and destabilizing elongation complexes. Seems to translocate with the RNA polymerase following initiation and acts by binding to the non template strand of the transcription bubble in elongation complexes. This Sulfurisphaera tokodaii (strain DSM 16993 / JCM 10545 / NBRC 100140 / 7) (Sulfolobus tokodaii) protein is Transcription factor E.